A 533-amino-acid chain; its full sequence is MAQSQVGKGSPSNATFRDKEKPQEVRKSNILAARAVSDAIRTSLGPKGMDKMIKTKNGEIIISNDGATILKHMAVLHPAARMLVDVSAAQDVEAGDGTTSVAILTGSLLGAAEKLLNKGIHPTLISESFQRAATRSAEVLLEMSHKISLDDKEALIRAASTSLSSKIVSQHSSLLSPLAVNSVLKVMNEEHTNVDLNDIRLIKKVGGTIDETELVNGVVLTQNVVKTAGGPVRVDKAKIALIQFQLSPPKPDMENNVVVNDYRQMDKILKEERAYLLNICKKIKKSKCNVLLIQKSILRDAVNDLALHFLSKLNIMVIKDIERDEIEFLSKATGCKPIADIDNFTEDRLGSADVVEEIESSGSRIVKIDGVSAKNVKPTVSIVCRGANQLVLDETERSIHDALCVVRCLVKEKALIAGGGAPEIEVSRVLMSEANKLSGVEQFVYQEFAQALEVIPTTLAENAGLNSINVVTDLRNRHANGEKNAGISVRRSGASNTYDEHVLQPVLVSSSAITLASECVKSILRIDDIAFSR.

Over residues 1 to 15 (MAQSQVGKGSPSNAT) the composition is skewed to polar residues. Residues 1–25 (MAQSQVGKGSPSNATFRDKEKPQEV) are disordered. The segment covering 16 to 25 (FRDKEKPQEV) has biased composition (basic and acidic residues).

This sequence belongs to the TCP-1 chaperonin family. As to quaternary structure, heterooligomeric complex of about 850 to 900 kDa that forms two stacked rings, 12 to 16 nm in diameter.

The protein localises to the cytoplasm. Its function is as follows. Molecular chaperone; assists the folding of proteins upon ATP hydrolysis. Known to play a role, in vitro, in the folding of actin and tubulin. The polypeptide is T-complex protein 1 subunit delta (CCT4) (Debaryomyces hansenii (strain ATCC 36239 / CBS 767 / BCRC 21394 / JCM 1990 / NBRC 0083 / IGC 2968) (Yeast)).